The sequence spans 508 residues: NADH-quinone oxidoreductase subunit N 2 (508 aa).

14 helical membrane passes run 14–34 (SYVA…VIVL), 43–63 (SLVW…WYTA), 90–110 (FTFF…LLSA), 119–139 (GAHM…MFMV), 144–164 (LLTI…LAGI), 179–199 (FLTG…IYGV), 223–243 (GPAL…GFGF), 275–295 (GAAM…APFT), 298–318 (WALI…LVAL), 327–347 (MAYS…ASGL), 353–373 (ISSV…IFAV), 400–420 (AWAL…VGFL), 433–455 (GYLW…YYRV), and 473–493 (TGIS…TIFA).

Belongs to the complex I subunit 2 family. As to quaternary structure, NDH-1 is composed of 14 different subunits. Subunits NuoA, H, J, K, L, M, N constitute the membrane sector of the complex.

The protein resides in the cell membrane. It catalyses the reaction a quinone + NADH + 5 H(+)(in) = a quinol + NAD(+) + 4 H(+)(out). In terms of biological role, NDH-1 shuttles electrons from NADH, via FMN and iron-sulfur (Fe-S) centers, to quinones in the respiratory chain. The immediate electron acceptor for the enzyme in this species is believed to be a menaquinone. Couples the redox reaction to proton translocation (for every two electrons transferred, four hydrogen ions are translocated across the cytoplasmic membrane), and thus conserves the redox energy in a proton gradient. This Symbiobacterium thermophilum (strain DSM 24528 / JCM 14929 / IAM 14863 / T) protein is NADH-quinone oxidoreductase subunit N 2.